The sequence spans 242 residues: Probable transcriptional regulatory protein Csac_0964 (242 aa).

Residues 1-20 (MSGHSKWANIRHKKEKTDAQ) form a disordered region.

It belongs to the TACO1 family.

It is found in the cytoplasm. The sequence is that of Probable transcriptional regulatory protein Csac_0964 from Caldicellulosiruptor saccharolyticus (strain ATCC 43494 / DSM 8903 / Tp8T 6331).